Here is a 238-residue protein sequence, read N- to C-terminus: Octanoyltransferase (238 aa).

One can recognise a BPL/LPL catalytic domain in the interval 40 to 220 (AGGSDALLLL…RVCDALDGRL (181 aa)). Residues 78 to 85 (RGGKITWH), 150 to 152 (AIG), and 163 to 165 (GFA) each bind substrate. Residue Cys181 is the Acyl-thioester intermediate of the active site.

It belongs to the LipB family.

It is found in the cytoplasm. It carries out the reaction octanoyl-[ACP] + L-lysyl-[protein] = N(6)-octanoyl-L-lysyl-[protein] + holo-[ACP] + H(+). It functions in the pathway protein modification; protein lipoylation via endogenous pathway; protein N(6)-(lipoyl)lysine from octanoyl-[acyl-carrier-protein]: step 1/2. Its function is as follows. Catalyzes the transfer of endogenously produced octanoic acid from octanoyl-acyl-carrier-protein onto the lipoyl domains of lipoate-dependent enzymes. Lipoyl-ACP can also act as a substrate although octanoyl-ACP is likely to be the physiological substrate. In Mycobacterium sp. (strain JLS), this protein is Octanoyltransferase.